The sequence spans 337 residues: GTP 3',8-cyclase (337 aa).

A Radical SAM core domain is found at 17 to 243; that stretch reads PFQRQYYYLR…HKSHTDGPAK (227 aa). Arg-26 serves as a coordination point for GTP. [4Fe-4S] cluster is bound by residues Cys-33 and Cys-37. Residue Tyr-39 coordinates S-adenosyl-L-methionine. Cys-40 lines the [4Fe-4S] cluster pocket. Position 76 (Arg-76) interacts with GTP. Gly-80 is an S-adenosyl-L-methionine binding site. Thr-107 is a GTP binding site. Ser-131 provides a ligand contact to S-adenosyl-L-methionine. GTP is bound at residue Lys-168. Met-202 lines the S-adenosyl-L-methionine pocket. [4Fe-4S] cluster is bound by residues Cys-265 and Cys-268. 270–272 is a GTP binding site; sequence RLR. Cys-282 is a [4Fe-4S] cluster binding site.

It belongs to the radical SAM superfamily. MoaA family. Monomer and homodimer. Requires [4Fe-4S] cluster as cofactor.

The enzyme catalyses GTP + AH2 + S-adenosyl-L-methionine = (8S)-3',8-cyclo-7,8-dihydroguanosine 5'-triphosphate + 5'-deoxyadenosine + L-methionine + A + H(+). Its pathway is cofactor biosynthesis; molybdopterin biosynthesis. In terms of biological role, catalyzes the cyclization of GTP to (8S)-3',8-cyclo-7,8-dihydroguanosine 5'-triphosphate. The protein is GTP 3',8-cyclase of Haemophilus influenzae (strain PittEE).